Here is a 324-residue protein sequence, read N- to C-terminus: 4-hydroxy-3-methylbut-2-enyl diphosphate reductase (324 aa).

Cysteine 28 contributes to the [4Fe-4S] cluster binding site. Residues histidine 57 and histidine 90 each contribute to the (2E)-4-hydroxy-3-methylbut-2-enyl diphosphate site. Dimethylallyl diphosphate-binding residues include histidine 57 and histidine 90. Residues histidine 57 and histidine 90 each coordinate isopentenyl diphosphate. Cysteine 112 is a binding site for [4Fe-4S] cluster. Histidine 140 is a binding site for (2E)-4-hydroxy-3-methylbut-2-enyl diphosphate. Histidine 140 is a dimethylallyl diphosphate binding site. Isopentenyl diphosphate is bound at residue histidine 140. Catalysis depends on glutamate 142, which acts as the Proton donor. Threonine 180 contributes to the (2E)-4-hydroxy-3-methylbut-2-enyl diphosphate binding site. Cysteine 210 contacts [4Fe-4S] cluster. Serine 238, serine 239, asparagine 240, and serine 282 together coordinate (2E)-4-hydroxy-3-methylbut-2-enyl diphosphate. Residues serine 238, serine 239, asparagine 240, and serine 282 each coordinate dimethylallyl diphosphate. Isopentenyl diphosphate contacts are provided by serine 238, serine 239, asparagine 240, and serine 282.

The protein belongs to the IspH family. Requires [4Fe-4S] cluster as cofactor.

It carries out the reaction isopentenyl diphosphate + 2 oxidized [2Fe-2S]-[ferredoxin] + H2O = (2E)-4-hydroxy-3-methylbut-2-enyl diphosphate + 2 reduced [2Fe-2S]-[ferredoxin] + 2 H(+). It catalyses the reaction dimethylallyl diphosphate + 2 oxidized [2Fe-2S]-[ferredoxin] + H2O = (2E)-4-hydroxy-3-methylbut-2-enyl diphosphate + 2 reduced [2Fe-2S]-[ferredoxin] + 2 H(+). Its pathway is isoprenoid biosynthesis; dimethylallyl diphosphate biosynthesis; dimethylallyl diphosphate from (2E)-4-hydroxy-3-methylbutenyl diphosphate: step 1/1. It participates in isoprenoid biosynthesis; isopentenyl diphosphate biosynthesis via DXP pathway; isopentenyl diphosphate from 1-deoxy-D-xylulose 5-phosphate: step 6/6. Catalyzes the conversion of 1-hydroxy-2-methyl-2-(E)-butenyl 4-diphosphate (HMBPP) into a mixture of isopentenyl diphosphate (IPP) and dimethylallyl diphosphate (DMAPP). Acts in the terminal step of the DOXP/MEP pathway for isoprenoid precursor biosynthesis. The polypeptide is 4-hydroxy-3-methylbut-2-enyl diphosphate reductase (Ralstonia nicotianae (strain ATCC BAA-1114 / GMI1000) (Ralstonia solanacearum)).